The primary structure comprises 605 residues: Capsid scaffolding protein (605 aa).

Residues His48, Ser116, and His139 each act as charge relay system in the active site. The tract at residues 235-275 (ASDAPDLQKPDKALQSPPPASTDPDTMLSGNAGEGATACGG) is disordered. Residues 281–300 (QDLISVPRNTFMTLLQTNLD) are interaction with pAP. 2 disordered regions span residues 403–432 (DYVP…PGED) and 489–588 (PHQS…KSVS). A Nuclear localization signal motif is present at residues 410–416 (RSNKRKR). The segment covering 568 to 579 (ASASGVAQSKEP) has biased composition (polar residues). The interval 585–605 (KSVSAHLKSIFCEELLNKRVA) is interaction with major capsid protein.

The protein belongs to the herpesviridae capsid scaffolding protein family. In terms of assembly, homomultimer. Interacts with major capsid protein. As to quaternary structure, exists in a monomer-dimer equilibrium with the dimer being the active species. In terms of processing, capsid scaffolding protein is cleaved by assemblin after formation of the spherical procapsid. As a result, the capsid obtains its mature, icosahedral shape. Cleavages occur at two or more sites: release (R-site) and maturation (M-site).

Its subcellular location is the host cytoplasm. The protein resides in the host nucleus. It carries out the reaction Cleaves -Ala-|-Ser- and -Ala-|-Ala- bonds in the scaffold protein.. Functionally, acts as a scaffold protein by binding major capsid protein in the cytoplasm, inducing the nuclear localization of both proteins. Multimerizes in the nucleus such as major capsid protein forms the icosahedral T=16 capsid. Autocatalytic cleavage releases the assembly protein, and subsequently abolishes interaction with major capsid protein. Cleavages products are evicted from the capsid before or during DNA packaging. Its function is as follows. Protease that plays an essential role in virion assembly within the nucleus. Catalyzes the cleavage of the assembly protein after formation of the spherical procapsid. By that cleavage, the capsid matures and gains its icosahedral shape. The cleavage sites seem to include -Ala-Ser-, -Ala-Ala-, as well as Ala-Thr bonds. Assemblin and cleavages products are evicted from the capsid before or during DNA packaging. Plays a major role in capsid assembly. Acts as a scaffold protein by binding major capsid protein. Multimerizes in the nucleus such as major capsid protein forms the icosahedral T=16 capsid. Cleaved by assemblin after capsid completion. The cleavages products are evicted from the capsid before or during DNA packaging. The chain is Capsid scaffolding protein from Epstein-Barr virus (strain AG876) (HHV-4).